The sequence spans 115 residues: uncharacterized protein (115 aa).

To M.tuberculosis Rv3073c.

This is an uncharacterized protein from Escherichia coli (strain K12).